Here is a 358-residue protein sequence, read N- to C-terminus: Feruloyl CoA ortho-hydroxylase F6H1-2 (358 aa).

The region spanning 200-308 (TKESLLMGSK…RISVPIFVNP (109 aa)) is the Fe2OG dioxygenase domain. 2-oxoglutarate is bound at residue tyrosine 216. Residues histidine 231, aspartate 233, and histidine 289 each coordinate Fe cation. 2 residues coordinate 2-oxoglutarate: arginine 299 and serine 301.

This sequence belongs to the iron/ascorbate-dependent oxidoreductase family. L-ascorbate serves as cofactor. Requires Fe(2+) as cofactor. Expressed at low levels in tubers, underground stems, leaves and petioles.

The catalysed reaction is (E)-feruloyl-CoA + 2-oxoglutarate + O2 = (E)-6-hydroxyferuloyl-CoA + succinate + CO2. It functions in the pathway phenylpropanoid metabolism. Its function is as follows. 2-oxoglutarate (OG)- and Fe(II)-dependent dioxygenase (2OGD) involved in scopoletin biosynthesis. Converts feruloyl CoA into 6'-hydroxyferuloyl CoA, and, at low efficiency, caffeoyl-CoA into 6'-hydroxycaffeate, but has no activity with p-coumaroyl-CoA. The chain is Feruloyl CoA ortho-hydroxylase F6H1-2 from Ipomoea batatas (Sweet potato).